The sequence spans 756 residues: Membrane-anchored protein 1 (756 aa).

The first 24 residues, 1–24 (MIRNTLAFLAILFLLIPTALLIIG), serve as a signal peptide directing secretion. Residues N52 and N64 are each glycosylated (N-linked (GlcNAc...) asparagine). The next 3 membrane-spanning stretches (helical) occupy residues 91-111 (IISA…IFLV), 120-140 (IIVV…ELVL), and 148-168 (QSYV…ALCL). An N-linked (GlcNAc...) asparagine glycan is attached at N190. Residues 281-328 (YDEFRKSESSPSRSSVLSTSKPEVHETEGYCPHKTGNRPGFPSLNIPR) form a disordered region. Residues 289–300 (SSPSRSSVLSTS) show a composition bias toward low complexity. N396 and N407 each carry an N-linked (GlcNAc...) asparagine glycan. Positions 427–453 (EPPATRMPQTRSPVNDHSSFPSDLPIK) are disordered. Over residues 433-447 (MPQTRSPVNDHSSFP) the composition is skewed to polar residues. S438 is subject to Phosphoserine. N-linked (GlcNAc...) asparagine glycans are attached at residues N459, N470, N471, N496, N497, N521, N522, N547, N548, N573, N574, N594, N598, N599, N618, N623, N649, N664, N676, and N685. The disordered stretch occupies residues 482-650 (MLKNVGNGPR…MPTSPNSRNN (169 aa)). Residues 485-520 (NVGNGPRNAPRNNSSNNLHAQGGMPMNMRGPRGAPR) are compositionally biased toward low complexity. Composition is skewed to polar residues over residues 593–605 (RNTS…SEFN), 617–629 (RNAS…TDLF), and 640–650 (GMPTSPNSRNN). A compositionally biased stretch (polar residues) spans 686–697 (GSRNPSHGSLNT). Positions 686-713 (GSRNPSHGSLNTAHAGMGYGPRSMMRDP) are disordered. A glycan (N-linked (GlcNAc...) asparagine) is linked at N715. Positions 735-756 (FELPVRGNRNNRRGPGGNRMIR) are disordered.

To yeast YOL019W and YMR063W.

Its subcellular location is the cell membrane. It is found in the cell tip. Its function is as follows. Required for correct cell separation at high temperatures. This Schizosaccharomyces pombe (strain 972 / ATCC 24843) (Fission yeast) protein is Membrane-anchored protein 1 (mac1).